The primary structure comprises 343 residues: DNA polymerase III subunit delta (343 aa).

3 domain regions span residues 1-140 (MIRL…VTCQ), 141-210 (TPEQ…NDAA), and 211-343 (HFTP…FIDG).

Belongs to the DNA polymerase HolA subunit family. As to quaternary structure, the DNA polymerase III holoenzyme complex contains at least 10 different subunits organized into 3 functionally essential subassemblies: the Pol III core, the beta sliding clamp processivity factor and the clamp-loading complex. The Pol III core (subunits alpha, epsilon and theta) contains the polymerase and the 3'-5' exonuclease proofreading activities. The polymerase is tethered to the template via the dimeric beta sliding clamp processivity factor. The clamp-loading complex (also called gamma complex) assembles the beta sliding clamp onto the primed template and plays a central role in the organization and communication at the replication fork. The clamp-loading complex contains delta, delta', psi and chi, and 3 copies of either or both of two different DnaX proteins, gamma and tau. The DNA replisome complex has a single clamp loader (3 tau and 1 each of delta, delta', psi and chi subunits) which binds 3 Pol III cores (1 core on the leading strand and 2 on the lagging strand) each with a beta sliding clamp dimer. Additional proteins in the replisome are other copies of gamma, psi and chi, Ssb, DNA helicase and RNA primase. The clamp loader hydrolyzes ATP to assemble the beta processivity factor onto the primed template and plays a central role in the organization and communication at the replication fork; the minimal complex to load the beta sliding clamp on DNA is delta, delta', gamma.

The catalysed reaction is DNA(n) + a 2'-deoxyribonucleoside 5'-triphosphate = DNA(n+1) + diphosphate. Its function is as follows. Part of the beta sliding clamp loading complex, which hydrolyzes ATP to load the beta clamp onto primed DNA to form the DNA replication pre-initiation complex. DNA polymerase III is a complex, multichain enzyme responsible for most of the replicative synthesis in bacteria. This DNA polymerase also exhibits 3'-5' exonuclease activity. The delta subunit is the wrench that will open the beta subunit dimer, which has been modeled to leave a gap large enough for ssDNA to pass through. The gamma complex (gamma(3),delta,delta') is thought to load beta dimers onto DNA by binding ATP which alters the complex's conformation so it can bind beta sliding clamp dimers and open them at one interface. Primed DNA is recognized, ATP is hydrolyzed releasing the gamma complex and closing the beta sliding clamp ring around the primed DNA. The polypeptide is DNA polymerase III subunit delta (holA) (Escherichia coli (strain K12)).